The primary structure comprises 79 residues: ESX secretion system protein YukD (79 aa).

Belongs to the EsaB family.

In terms of biological role, required for YukE secretion. Probable component or regulator of the ESX/ESAT-6-like secretion system (BsEss). This is ESX secretion system protein YukD (yukD) from Bacillus subtilis (strain 168).